Reading from the N-terminus, the 320-residue chain is Nucleoporin Nup37 (320 aa).

WD repeat units lie at residues 67–113 (KEQR…FTSL), 118–157 (GHGDYVNDVSWVCDGELLASVSDDFTCRFWTTTGGGENVI), 160–200 (GLSS…TVIS), and 203–242 (SPKFPLMSADWAHSNRLFITSLAGGDVVTWDLNRPYVPAD).

Its subcellular location is the nucleus. It localises to the nuclear pore complex. In terms of biological role, as part of the nuclear pore complex (NPC), has a role in its assembly and function. (Microbial infection) Required for optimal replication of E.chaffeensis. This chain is Nucleoporin Nup37, found in Drosophila melanogaster (Fruit fly).